The sequence spans 301 residues: Tetratricopeptide repeat domain-containing protein PYG7, chloroplastic (301 aa).

Residues 1-61 constitute a chloroplast transit peptide; sequence MFESNMVLQT…FHDYVFAEIS (61 aa). 2 helical membrane passes run 82–102 and 121–141; these read TFLL…AAAA and IQLS…FYVI. TPR repeat units follow at residues 168–201, 206–239, and 240–273; these read ATEL…WDGD, AQVY…QPGY, and VTAW…DPNN.

Interacts with PSA3.

The protein resides in the plastid. It is found in the chloroplast thylakoid membrane. Nuclear genome-encoded factor required for the accumulation of photosystem I (PSI). Functions as a PSI biogenesis factor. Cooperates with PSA3 to promote the stable assembly of PSI in the thylakoid membrane. May target primarily the PsaC subunit. This chain is Tetratricopeptide repeat domain-containing protein PYG7, chloroplastic, found in Arabidopsis thaliana (Mouse-ear cress).